Consider the following 114-residue polypeptide: Type 4 adapter protein IcmS (114 aa).

The T4BSS is a complex nanomachine composed of several subcomplexes. This subunit is part of the Type IV Coupling Complex (T4CC), a subcomplex composed of the DotLMNYZ core and the IcmSW-LvgA adapter subunits, linked by the C-terminal tail of DotL. Interacts with IcmW. IcmS and IcmW form a stable complex. Interacts directly with the type 4 coupling protein DotL. Interacts with LvgA. Interacts with effector proteins.

It localises to the cytoplasm. Its activity is regulated as follows. Interaction with DotL is critical for the export of IcmSW-dependent substrates. In terms of biological role, component of the Dot/Icm type IVB secretion system (T4BSS), which is used to inject bacterial effector proteins into eukaryotic host cells. Part of a subcomplex which recruits effector proteins and delivers them to the core transmembrane subcomplex. The IcmS/IcmW protein complex plays an important role in protein translocation by interacting with multiple Dot/Icm effector proteins to facilitate their translocation into host cells. Interaction promotes conformational changes in the effector protein, which may facilitate display of a C-terminal translocation signal. May maintain the substrates in a translocation competent form. Required for intracellular growth in host cells, replicative phagosome formation and phagosome trafficking. IcmS is required for IcmW stability. The polypeptide is Type 4 adapter protein IcmS (Legionella pneumophila subsp. pneumophila (strain Philadelphia 1 / ATCC 33152 / DSM 7513)).